A 381-amino-acid polypeptide reads, in one-letter code: Cytochrome b (381 aa).

The next 4 membrane-spanning stretches (helical) occupy residues phenylalanine 33 to methionine 53, tryptophan 77 to valine 98, tryptophan 113 to leucine 133, and phenylalanine 178 to threonine 198. 2 residues coordinate heme b: histidine 83 and histidine 97. 2 residues coordinate heme b: histidine 182 and histidine 196. Histidine 201 contacts a ubiquinone. Helical transmembrane passes span isoleucine 226 to serine 246, leucine 288 to histidine 308, isoleucine 320 to glycine 340, and phenylalanine 347 to proline 367.

This sequence belongs to the cytochrome b family. In terms of assembly, the cytochrome bc1 complex contains 11 subunits: 3 respiratory subunits (MT-CYB, CYC1 and UQCRFS1), 2 core proteins (UQCRC1 and UQCRC2) and 6 low-molecular weight proteins (UQCRH/QCR6, UQCRB/QCR7, UQCRQ/QCR8, UQCR10/QCR9, UQCR11/QCR10 and a cleavage product of UQCRFS1). This cytochrome bc1 complex then forms a dimer. Requires heme b as cofactor.

The protein resides in the mitochondrion inner membrane. Component of the ubiquinol-cytochrome c reductase complex (complex III or cytochrome b-c1 complex) that is part of the mitochondrial respiratory chain. The b-c1 complex mediates electron transfer from ubiquinol to cytochrome c. Contributes to the generation of a proton gradient across the mitochondrial membrane that is then used for ATP synthesis. The sequence is that of Cytochrome b (MT-CYB) from Sminthopsis youngsoni (Lesser hairy-footed dunnart).